Consider the following 230-residue polypeptide: Cyclin-dependent kinase inhibitor rum1 (230 aa).

Disordered stretches follow at residues 1–25, 43–118, and 188–230; these read MEPS…SFKG, PESD…DGLY, and SRVP…NLLR. A Phosphothreonine; by MAPK modification is found at Thr-13. Ser-19 carries the post-translational modification Phosphoserine; by MAPK. Phosphothreonine; by cdc2 occurs at positions 58 and 62. The interval 67–147 is CDK inhibitory and cyclin-binding; the sequence is LLPNLMLQDR…TFKPKLLFAD (81 aa). Positions 78-91 are enriched in basic and acidic residues; sequence NSLERCMEEDREHN. Residues 93 to 102 show a composition bias toward polar residues; sequence FLSSSDNQLL. Residues 101-230 form a required for activity as a cdc2 kinase inhibitor region; that stretch reads LLSRKKRKPT…KDENRHNLLR (130 aa). Residues 188-199 show a composition bias toward low complexity; the sequence is SRVPSSSSGSFV. Residues 219–230 show a composition bias toward basic and acidic residues; the sequence is NTKDENRHNLLR.

Interacts with cdc13, cig2 and pop1. Post-translationally, phosphorylated by cig1-associated cdc2 which leads to increased stability. Phosphorylation by MAPK reduces cdc2 kinase inhibitor ability.

It localises to the nucleus. Its function is as follows. Regulator of cell cycle G1 phase progression. Ensures the correct sequence of S phase and mitosis in the cell by acting as an inhibitor of the cdc2 mitotic kinase. Probably interacts with cdc2 to inhibit its action until the cell mass for Start is reached. Determines the length of the pre-Start G1 period and prevents mitosis from happening in early G1 cells. Required for maintaining pheromone-induced G1 arrest. Acts as an adapter protein since interaction with cdc13 promotes cyclin proteolysis during G1. Becomes a target for degradation at the G1/S phase transition, following phosphorylation by cig1-associated cdc2 at the G1/S phase transition. The protein is Cyclin-dependent kinase inhibitor rum1 (rum1) of Schizosaccharomyces pombe (strain 972 / ATCC 24843) (Fission yeast).